The sequence spans 469 residues: Neuraminidase (469 aa).

Over 1 to 9 (MNPNQKIIT) the chain is Intravirion. Residues 10-30 (IGSVSLTIATICFLMQIAILV) form a helical membrane-spanning segment. Positions 11–33 (GSVSLTIATICFLMQIAILVTTV) are involved in apical transport and lipid raft association. Over 31–469 (TTVTLHFKQY…DGADINLMPI (439 aa)) the chain is Virion surface. The segment at 36–88 (HFKQYECSSPPNNQVMPCEPIIIERNITEIVYLTNTTIEKEICPKLVEYRNWS) is hypervariable stalk region. N-linked (GlcNAc...) asparagine; by host glycosylation is found at Asn61, Asn70, and Asn86. A head of neuraminidase region spans residues 91-469 (QCKITGFAPF…DGADINLMPI (379 aa)). 8 disulfides stabilise this stretch: Cys92–Cys417, Cys124–Cys129, Cys183–Cys230, Cys232–Cys237, Cys278–Cys291, Cys280–Cys289, Cys318–Cys337, and Cys421–Cys447. Substrate is bound at residue Arg118. An N-linked (GlcNAc...) asparagine; by host glycan is attached at Asn146. Asp151 serves as the catalytic Proton donor/acceptor. Residue Arg152 coordinates substrate. Residues Asn200 and Asn234 are each glycosylated (N-linked (GlcNAc...) asparagine; by host). 276–277 (EE) provides a ligand contact to substrate. Arg292 is a binding site for substrate. 3 residues coordinate Ca(2+): Asp293, Gly297, and Asp324. Arg371 contacts substrate. Asn402 carries an N-linked (GlcNAc...) asparagine; by host glycan. Residue Tyr406 is the Nucleophile of the active site.

This sequence belongs to the glycosyl hydrolase 34 family. Homotetramer. Ca(2+) is required as a cofactor. N-glycosylated.

It localises to the virion membrane. The protein localises to the host apical cell membrane. The enzyme catalyses Hydrolysis of alpha-(2-&gt;3)-, alpha-(2-&gt;6)-, alpha-(2-&gt;8)- glycosidic linkages of terminal sialic acid residues in oligosaccharides, glycoproteins, glycolipids, colominic acid and synthetic substrates.. With respect to regulation, inhibited by the neuraminidase inhibitors zanamivir (Relenza) and oseltamivir (Tamiflu). These drugs interfere with the release of progeny virus from infected cells and are effective against all influenza strains. Resistance to neuraminidase inhibitors is quite rare. Functionally, catalyzes the removal of terminal sialic acid residues from viral and cellular glycoconjugates. Cleaves off the terminal sialic acids on the glycosylated HA during virus budding to facilitate virus release. Additionally helps virus spread through the circulation by further removing sialic acids from the cell surface. These cleavages prevent self-aggregation and ensure the efficient spread of the progeny virus from cell to cell. Otherwise, infection would be limited to one round of replication. Described as a receptor-destroying enzyme because it cleaves a terminal sialic acid from the cellular receptors. May facilitate viral invasion of the upper airways by cleaving the sialic acid moieties on the mucin of the airway epithelial cells. Likely to plays a role in the budding process through its association with lipid rafts during intracellular transport. May additionally display a raft-association independent effect on budding. Plays a role in the determination of host range restriction on replication and virulence. Sialidase activity in late endosome/lysosome traffic seems to enhance virus replication. This Influenza A virus (strain A/Memphis/4/1980 H3N2) protein is Neuraminidase.